We begin with the raw amino-acid sequence, 158 residues long: Transcription elongation factor GreB (158 aa).

Belongs to the GreA/GreB family. GreB subfamily.

Its function is as follows. Necessary for efficient RNA polymerase transcription elongation past template-encoded arresting sites. The arresting sites in DNA have the property of trapping a certain fraction of elongating RNA polymerases that pass through, resulting in locked ternary complexes. Cleavage of the nascent transcript by cleavage factors such as GreA or GreB allows the resumption of elongation from the new 3'terminus. GreB releases sequences of up to 9 nucleotides in length. The sequence is that of Transcription elongation factor GreB from Escherichia coli (strain K12).